Consider the following 152-residue polypeptide: Ubiquitin-conjugating enzyme E2 B (152 aa).

A UBC core domain is found at 4 to 150; it reads PARRRLMRDF…VSAIVEQSWN (147 aa). Catalysis depends on C88, which acts as the Glycyl thioester intermediate.

The protein belongs to the ubiquitin-conjugating enzyme family. Interacts with RAD18, UBR2 and WAC.

The protein localises to the cell membrane. It is found in the nucleus. It catalyses the reaction S-ubiquitinyl-[E1 ubiquitin-activating enzyme]-L-cysteine + [E2 ubiquitin-conjugating enzyme]-L-cysteine = [E1 ubiquitin-activating enzyme]-L-cysteine + S-ubiquitinyl-[E2 ubiquitin-conjugating enzyme]-L-cysteine.. Its pathway is protein modification; protein ubiquitination. Functionally, E2 ubiquitin-conjugating enzyme that accepts ubiquitin from the ubiquitin-activating enzyme E1 and transfers it to a E3 ubiquitin-protein ligase. In vitro catalyzes 'Lys-11'-, as well as 'Lys-48'- and 'Lys-63'-linked polyubiquitination. Together with the E3 enzyme BRE1 (RNF20 and/or RNF40), plays a role in transcription regulation by catalyzing the monoubiquitination of histone H2B at 'Lys-120' to form H2BK120ub1. H2BK120ub1 gives a specific tag for epigenetic transcriptional activation, elongation by RNA polymerase II, telomeric silencing, and is also a prerequisite for H3K4me and H3K79me formation. May play a role in DNA repair. Associates to the E3 ligase RAD18 to form the UBE2B-RAD18 ubiquitin ligase complex involved in mono-ubiquitination of DNA-associated PCNA on 'Lys-164'. In association with the E3 enzyme UBR4, is involved in N-end rule-dependent protein degradation. May be involved in neurite outgrowth. This chain is Ubiquitin-conjugating enzyme E2 B (UBE2B), found in Bos taurus (Bovine).